We begin with the raw amino-acid sequence, 217 residues long: MTDTNKMIINLAVFGRTQSGKSSAGNVLLGSADFYSSFAPGSVTKECSLGRSCHLHGFMRRGGQEISLQIQVLDTPGYPHSKLSTRCVKQEVKKALLHHFGQEGLHLALLVQRADVPFFGQEASNAVQLMQELLGDSCKNYMAVLFTHAEELEEAGLSEEEYLREASDTLLTLLDSVQHRYIFLSGRGNLCNEQRIKILERIMEFIKENHFQVLSLA.

The 212-residue stretch at 6-217 folds into the AIG1-type G domain; sequence KMIINLAVFG…ENHFQVLSLA (212 aa). GTP-binding positions include 15 to 23, serine 36, and 148 to 150; these read GRTQSGKSS and HAE.

Belongs to the TRAFAC class TrmE-Era-EngA-EngB-Septin-like GTPase superfamily. AIG1/Toc34/Toc159-like paraseptin GTPase family. IAN subfamily.

The protein is GTPase IMAP family member GIMD1 (Gimd1) of Mus musculus (Mouse).